Consider the following 312-residue polypeptide: Magnesium protoporphyrin IX methyltransferase, chloroplastic (312 aa).

Residues 1 to 39 constitute a chloroplast transit peptide; that stretch reads MPFAPSLLSSSSSVSQFLPRFPNATRFNVTPRSRAATVV.

The protein belongs to the class I-like SAM-binding methyltransferase superfamily. Magnesium protoporphyrin O-methyltransferase family.

The protein resides in the plastid. It is found in the chloroplast membrane. It localises to the chloroplast thylakoid membrane. It carries out the reaction Mg-protoporphyrin IX + S-adenosyl-L-methionine = Mg-protoporphyrin IX 13-monomethyl ester + S-adenosyl-L-homocysteine. Its pathway is porphyrin-containing compound metabolism; chlorophyll biosynthesis. With respect to regulation, regulated by the folate status via an increased concentration of S-adenosyl-homocysteine (AdoHcy), a potent inhibitor of most AdoMet-dependent methyltransferases. Functionally, converts Mg-protoporphyrin IX to Mg-protoporphyrin IX methylester using S-adenosyl-L-methionine as a cofactor. Involved in chloroplast-to-nucleus signaling by acting as a negative effector of nuclear photosynthetic gene expression. This is Magnesium protoporphyrin IX methyltransferase, chloroplastic (CHLM) from Arabidopsis thaliana (Mouse-ear cress).